The chain runs to 457 residues: Angiopoietin-related protein 6 (457 aa).

The signal sequence occupies residues 1 to 24; the sequence is MGTARLRKLQLLLLLGAWRALGGA. 2 coiled-coil regions span residues 51 to 77 and 126 to 164; these read DSEL…RAAE and LLAE…QHSS. The interval 201–235 is disordered; the sequence is SNTSRRLDQTPEHQREQSLRQQGPPSSLLPTGHLA. Asparagine 202 is a glycosylation site (N-linked (GlcNAc...) asparagine). The span at 205–218 shows a compositional bias: basic and acidic residues; sequence RRLDQTPEHQREQS. A compositionally biased stretch (polar residues) spans 219–229; sequence LRQQGPPSSLL. In terms of domain architecture, Fibrinogen C-terminal spans 238 to 456; the sequence is TRPVGPWRDC…KAVMLTRLVR (219 aa). 2 cysteine pairs are disulfide-bonded: cysteine 247–cysteine 274 and cysteine 397–cysteine 410.

Highly expressed in the liver, specifically in hepatocytes, and weakly in the heart. Expressed in hematopoietic cells, platelets and mast cells, and detected at wounded skin.

It is found in the secreted. Its function is as follows. May play a role in the wound healing process. May promote epidermal proliferation, remodeling and regeneration. May promote the chemotactic activity of endothelial cells and induce neovascularization. May counteract high-fat diet-induced obesity and related insulin resistance through increased energy expenditure. The polypeptide is Angiopoietin-related protein 6 (Angptl6) (Mus musculus (Mouse)).